Here is a 484-residue protein sequence, read N- to C-terminus: Replication-associated protein (484 aa).

A Nuclear localization signal motif is present at residues 146–153; it reads IRKYHQSV.

The protein resides in the host nucleus. Plays an essential for the replication of viral DNA. Presumably cleaves viral genomic dsRNA replicative form to initiate rolling circle replication. This Chaetoceros (Chaetoceros sp. DNA virus 7) protein is Replication-associated protein.